The chain runs to 351 residues: Phospho-N-acetylmuramoyl-pentapeptide-transferase (351 aa).

Helical transmembrane passes span 17 to 37 (MAYA…YIIL), 62 to 82 (GIPT…LVFW), 85 to 105 (ILNV…FLGF), 130 to 150 (IIFS…HVSV), 158 to 178 (SFQI…LISA), 190 to 210 (GLAI…AYLT), 230 to 250 (LVIF…FNAY), 254 to 274 (IMMG…AALI), 279 to 299 (ILFS…IIQV), and 328 to 348 (QVVI…LSTI).

It belongs to the glycosyltransferase 4 family. MraY subfamily. Mg(2+) serves as cofactor.

It localises to the cell inner membrane. It catalyses the reaction UDP-N-acetyl-alpha-D-muramoyl-L-alanyl-gamma-D-glutamyl-meso-2,6-diaminopimeloyl-D-alanyl-D-alanine + di-trans,octa-cis-undecaprenyl phosphate = di-trans,octa-cis-undecaprenyl diphospho-N-acetyl-alpha-D-muramoyl-L-alanyl-D-glutamyl-meso-2,6-diaminopimeloyl-D-alanyl-D-alanine + UMP. It functions in the pathway cell wall biogenesis; peptidoglycan biosynthesis. Its function is as follows. Catalyzes the initial step of the lipid cycle reactions in the biosynthesis of the cell wall peptidoglycan: transfers peptidoglycan precursor phospho-MurNAc-pentapeptide from UDP-MurNAc-pentapeptide onto the lipid carrier undecaprenyl phosphate, yielding undecaprenyl-pyrophosphoryl-MurNAc-pentapeptide, known as lipid I. The chain is Phospho-N-acetylmuramoyl-pentapeptide-transferase from Borreliella burgdorferi (strain ATCC 35210 / DSM 4680 / CIP 102532 / B31) (Borrelia burgdorferi).